Consider the following 221-residue polypeptide: Probable transaldolase (221 aa).

K87 serves as the catalytic Schiff-base intermediate with substrate.

It belongs to the transaldolase family. Type 3B subfamily.

It is found in the cytoplasm. It catalyses the reaction D-sedoheptulose 7-phosphate + D-glyceraldehyde 3-phosphate = D-erythrose 4-phosphate + beta-D-fructose 6-phosphate. Its pathway is carbohydrate degradation; pentose phosphate pathway; D-glyceraldehyde 3-phosphate and beta-D-fructose 6-phosphate from D-ribose 5-phosphate and D-xylulose 5-phosphate (non-oxidative stage): step 2/3. Its function is as follows. Transaldolase is important for the balance of metabolites in the pentose-phosphate pathway. The protein is Probable transaldolase of Syntrophobacter fumaroxidans (strain DSM 10017 / MPOB).